Consider the following 702-residue polypeptide: Polyribonucleotide nucleotidyltransferase (702 aa).

The Mg(2+) site is built by D485 and D491. Positions 552–612 (PRTEIICIDP…EGVKKAISII (61 aa)) constitute a KH domain. An S1 motif domain is found at 622–690 (GEIYLGKVTK…NQGRINLSRK (69 aa)).

The protein belongs to the polyribonucleotide nucleotidyltransferase family. The cofactor is Mg(2+).

Its subcellular location is the cytoplasm. The catalysed reaction is RNA(n+1) + phosphate = RNA(n) + a ribonucleoside 5'-diphosphate. Involved in mRNA degradation. Catalyzes the phosphorolysis of single-stranded polyribonucleotides processively in the 3'- to 5'-direction. The protein is Polyribonucleotide nucleotidyltransferase of Clostridium botulinum (strain 657 / Type Ba4).